Reading from the N-terminus, the 93-residue chain is HIG1 domain family member 1A, mitochondrial (93 aa).

Serine 2 is subject to N-acetylserine. The region spanning 2-93 (STNTDLSLSS…YQEFWAKRKP (92 aa)) is the HIG1 domain. Residue serine 8 is modified to Phosphoserine. Helical transmembrane passes span 28-48 (PFVP…LYKL) and 69-89 (GFVV…EFWA). Residues 90–93 (KRKP) are Mitochondrial matrix-facing.

In terms of assembly, associates with cytochrome c oxidase (COX, complex IV); proposed complex component. Also associates with respiratory chain supercomplexes. In terms of tissue distribution, expressed in brain and spinal cord.

The protein localises to the mitochondrion membrane. Its subcellular location is the mitochondrion inner membrane. Functionally, proposed subunit of cytochrome c oxidase (COX, complex IV), which is the terminal component of the mitochondrial respiratory chain that catalyzes the reduction of oxygen to water. May play a role in the assembly of respiratory supercomplexes. The protein is HIG1 domain family member 1A, mitochondrial (Higd1a) of Rattus norvegicus (Rat).